A 382-amino-acid chain; its full sequence is MYNLPRDLPEEVLCRIPLTSLRPVRSTCKKWSTLSKCGSFAKKHLAQAKVLADAKEFMVVLMMNFRVYLMRVNLQNNVVESSSSSSSSSSSCIKREAKLISLGDEEADISQVFHCDGLLLCISITESKTRLVVWNPYWGHTRLFEPTHQFNKFDSYSYALGYDKSRKSHKILRGITCLDPFKIYDFNSDLWRDLDVTPEWHLWQMLHGVSLKGNAYWFARENYTETMDTDHFFLLCFDFTSETFGPPLPLPFEFAVSEDTMSVSSVREEQLVVLYQPWDYLQLDIWVTSKIEPNAVSWNSKVFLSVSLKQLVSPQFQLTFGSFFIDEEKKVAVVFDKDYDNKRNIAYIFGVDGSFKAVDLGDSDRKCFPLVCSYVPSLVQLN.

Positions 1–44 (MYNLPRDLPEEVLCRIPLTSLRPVRSTCKKWSTLSKCGSFAKKH) constitute an F-box domain.

This is F-box protein At3g19470 from Arabidopsis thaliana (Mouse-ear cress).